The sequence spans 265 residues: MNIAIAGASGRMGRMLIEQVLNTEGVTLSGALDVPGSPALGQDAGLFLGRNTGVAITADLEAGLAGADCLIDFTRPEGTLVHLAAAKQLGVKMVVGTTGFDEAGKAALAEAAKSIGIVFAANFSVGVNATFKLLEVAAKLLSTGYDIEVIEAHHRFKVDAPSGTALKMGEVIADALGRDLKTCGVFAREGHTGERDPNSIGFATIRGGDIVGDHTVMFAGIGERIEISHKSSSRQSYADGAVRSARFLADKPTGLFDMQDVLGLK.

Residues 7 to 12 (GASGRM), Asp33, 96 to 98 (GTT), and 120 to 123 (AANF) each bind NAD(+). The Proton donor/acceptor role is filled by His153. His154 provides a ligand contact to (S)-2,3,4,5-tetrahydrodipicolinate. The Proton donor role is filled by Lys157. 163–164 (GT) contributes to the (S)-2,3,4,5-tetrahydrodipicolinate binding site.

This sequence belongs to the DapB family.

The protein resides in the cytoplasm. It carries out the reaction (S)-2,3,4,5-tetrahydrodipicolinate + NAD(+) + H2O = (2S,4S)-4-hydroxy-2,3,4,5-tetrahydrodipicolinate + NADH + H(+). The catalysed reaction is (S)-2,3,4,5-tetrahydrodipicolinate + NADP(+) + H2O = (2S,4S)-4-hydroxy-2,3,4,5-tetrahydrodipicolinate + NADPH + H(+). Its pathway is amino-acid biosynthesis; L-lysine biosynthesis via DAP pathway; (S)-tetrahydrodipicolinate from L-aspartate: step 4/4. Its function is as follows. Catalyzes the conversion of 4-hydroxy-tetrahydrodipicolinate (HTPA) to tetrahydrodipicolinate. This Cupriavidus taiwanensis (strain DSM 17343 / BCRC 17206 / CCUG 44338 / CIP 107171 / LMG 19424 / R1) (Ralstonia taiwanensis (strain LMG 19424)) protein is 4-hydroxy-tetrahydrodipicolinate reductase.